We begin with the raw amino-acid sequence, 287 residues long: Ribonuclease Z (287 aa).

Positions 64, 66, 68, 69, 124, 191, and 250 each coordinate Zn(2+). Aspartate 68 (proton acceptor) is an active-site residue.

The protein belongs to the RNase Z family. In terms of assembly, homodimer. It depends on Zn(2+) as a cofactor.

The catalysed reaction is Endonucleolytic cleavage of RNA, removing extra 3' nucleotides from tRNA precursor, generating 3' termini of tRNAs. A 3'-hydroxy group is left at the tRNA terminus and a 5'-phosphoryl group is left at the trailer molecule.. In terms of biological role, zinc phosphodiesterase, which displays some tRNA 3'-processing endonuclease activity. Probably involved in tRNA maturation, by removing a 3'-trailer from precursor tRNA. The sequence is that of Ribonuclease Z from Pyrobaculum islandicum (strain DSM 4184 / JCM 9189 / GEO3).